A 283-amino-acid chain; its full sequence is MNYNEVAKILAESLPYIQKYRGKTIVVKYGGSAMLDEQLKKYVINDLVLMKCVGINLVVVHGGGPFISSYLKKLNKESVFIDGLRYTDEETMDVVQMVLSGKVNKDLVKLIQSYGGKALGLCGIDGAMIKAEKISKGVDLGKVGEITDINTEIIISSIDNGYIPVISSIALGDDNETYNINADTCTFKIAAALKAQNLILLTDVPGVMRDMDDNSTLISELRLKDIKALYEDNIIKGGMLPKINCCVEAIKSGVKSAHIIDGRVPHCLLVELFSKEGIGTMIY.

Substrate-binding positions include 63 to 64 (GG), arginine 85, and asparagine 179.

This sequence belongs to the acetylglutamate kinase family. ArgB subfamily.

It localises to the cytoplasm. It carries out the reaction N-acetyl-L-glutamate + ATP = N-acetyl-L-glutamyl 5-phosphate + ADP. Its pathway is amino-acid biosynthesis; L-arginine biosynthesis; N(2)-acetyl-L-ornithine from L-glutamate: step 2/4. Its function is as follows. Catalyzes the ATP-dependent phosphorylation of N-acetyl-L-glutamate. This is Acetylglutamate kinase from Clostridium kluyveri (strain NBRC 12016).